We begin with the raw amino-acid sequence, 428 residues long: Serine--tRNA ligase (428 aa).

Residue 235–237 coordinates L-serine; that stretch reads TAE. Residue 266–268 coordinates ATP; the sequence is RSE. L-serine is bound at residue E289. 353–356 contacts ATP; that stretch reads EISS. S389 contributes to the L-serine binding site.

This sequence belongs to the class-II aminoacyl-tRNA synthetase family. Type-1 seryl-tRNA synthetase subfamily. As to quaternary structure, homodimer. The tRNA molecule binds across the dimer.

The protein localises to the cytoplasm. The catalysed reaction is tRNA(Ser) + L-serine + ATP = L-seryl-tRNA(Ser) + AMP + diphosphate + H(+). It carries out the reaction tRNA(Sec) + L-serine + ATP = L-seryl-tRNA(Sec) + AMP + diphosphate + H(+). The protein operates within aminoacyl-tRNA biosynthesis; selenocysteinyl-tRNA(Sec) biosynthesis; L-seryl-tRNA(Sec) from L-serine and tRNA(Sec): step 1/1. Functionally, catalyzes the attachment of serine to tRNA(Ser). Is also able to aminoacylate tRNA(Sec) with serine, to form the misacylated tRNA L-seryl-tRNA(Sec), which will be further converted into selenocysteinyl-tRNA(Sec). This Shewanella sediminis (strain HAW-EB3) protein is Serine--tRNA ligase.